The chain runs to 202 residues: Ribosome maturation factor RimM (202 aa).

Residues Ala-100–Leu-195 form the PRC barrel domain.

The protein belongs to the RimM family. In terms of assembly, binds ribosomal protein uS19.

The protein localises to the cytoplasm. An accessory protein needed during the final step in the assembly of 30S ribosomal subunit, possibly for assembly of the head region. Essential for efficient processing of 16S rRNA. May be needed both before and after RbfA during the maturation of 16S rRNA. It has affinity for free ribosomal 30S subunits but not for 70S ribosomes. The sequence is that of Ribosome maturation factor RimM from Bifidobacterium longum (strain NCC 2705).